We begin with the raw amino-acid sequence, 148 residues long: D-aminoacyl-tRNA deacylase (148 aa).

Residues 137–138 carry the Gly-cisPro motif, important for rejection of L-amino acids motif; that stretch reads GP.

It belongs to the DTD family. In terms of assembly, homodimer.

The protein resides in the cytoplasm. The catalysed reaction is glycyl-tRNA(Ala) + H2O = tRNA(Ala) + glycine + H(+). It catalyses the reaction a D-aminoacyl-tRNA + H2O = a tRNA + a D-alpha-amino acid + H(+). Functionally, an aminoacyl-tRNA editing enzyme that deacylates mischarged D-aminoacyl-tRNAs. Also deacylates mischarged glycyl-tRNA(Ala), protecting cells against glycine mischarging by AlaRS. Acts via tRNA-based rather than protein-based catalysis; rejects L-amino acids rather than detecting D-amino acids in the active site. By recycling D-aminoacyl-tRNA to D-amino acids and free tRNA molecules, this enzyme counteracts the toxicity associated with the formation of D-aminoacyl-tRNA entities in vivo and helps enforce protein L-homochirality. This Ligilactobacillus salivarius (strain UCC118) (Lactobacillus salivarius) protein is D-aminoacyl-tRNA deacylase.